Reading from the N-terminus, the 309-residue chain is Ecto-ADP-ribosyltransferase 5 (309 aa).

The N-terminal stretch at 1 to 23 (MILEDLLMVLSCLSLHALWKVRA) is a signal peptide. An intrachain disulfide couples Cys-43 to Cys-259. In terms of domain architecture, TR mART core spans 63–253 (ALLRESWEAA…IVTLWSYDQT (191 aa)). Tyr-100 lines the NAD(+) pocket. An N-linked (GlcNAc...) asparagine glycan is attached at Asn-102. Residues Arg-161 and Gln-181 each coordinate NAD(+). Arg-161 is an active-site residue. The active site involves Ser-184. N-linked (GlcNAc...) asparagine glycosylation is present at Asn-197. Ser-215 contributes to the NAD(+) binding site. Residue Glu-222 is part of the active site.

Belongs to the Arg-specific ADP-ribosyltransferase family. As to expression, abundantly expressed in testis. Lower levels in cardiac and skeletal muscle.

The protein localises to the secreted. It localises to the membrane. It catalyses the reaction L-arginyl-[protein] + NAD(+) = N(omega)-(ADP-D-ribosyl)-L-arginyl-[protein] + nicotinamide + H(+). This chain is Ecto-ADP-ribosyltransferase 5 (Art5), found in Mus musculus (Mouse).